The chain runs to 581 residues: 2-succinyl-5-enolpyruvyl-6-hydroxy-3-cyclohexene-1-carboxylate synthase (581 aa).

It belongs to the TPP enzyme family. MenD subfamily. As to quaternary structure, homodimer. It depends on Mg(2+) as a cofactor. Mn(2+) is required as a cofactor. Thiamine diphosphate serves as cofactor.

The enzyme catalyses isochorismate + 2-oxoglutarate + H(+) = 5-enolpyruvoyl-6-hydroxy-2-succinyl-cyclohex-3-ene-1-carboxylate + CO2. It participates in quinol/quinone metabolism; 1,4-dihydroxy-2-naphthoate biosynthesis; 1,4-dihydroxy-2-naphthoate from chorismate: step 2/7. Its pathway is quinol/quinone metabolism; menaquinone biosynthesis. Its function is as follows. Catalyzes the thiamine diphosphate-dependent decarboxylation of 2-oxoglutarate and the subsequent addition of the resulting succinic semialdehyde-thiamine pyrophosphate anion to isochorismate to yield 2-succinyl-5-enolpyruvyl-6-hydroxy-3-cyclohexene-1-carboxylate (SEPHCHC). The polypeptide is 2-succinyl-5-enolpyruvyl-6-hydroxy-3-cyclohexene-1-carboxylate synthase (Chlorobium phaeobacteroides (strain BS1)).